The following is a 485-amino-acid chain: Hemolysin (485 aa).

An N-terminal signal peptide occupies residues 1–28 (MKNFKGRKFLTCVLVSLCTLNYSSISFA). The next 4 membrane-spanning stretches (beta stranded) occupy residues 196 to 209 (KAQI…NAKY), 216 to 225 (IDFNAVANGE), 294 to 303 (SKDVQAAFKA), and 311 to 323 (ETSG…FEES). Residues 465–475 (ECTGLAWEWWR) carry the Conserved undecapeptide motif.

This sequence belongs to the cholesterol-dependent cytolysin family. Homooligomeric pore complex of 35 to 50 subunits; when inserted in the host membrane.

It localises to the secreted. The protein localises to the host cell membrane. In terms of biological role, a cholesterol-dependent toxin with hemolytic activity against host red blood cells. Causes cytolysis by forming pores in cholesterol containing host membranes. binding to target membranes, the protein undergoes a major conformation change, leading to its insertion in the host membrane and formation of an oligomeric pore complex. Cholesterol is required for binding to host membranes, membrane insertion and pore formation; cholesterol binding is mediated by a Thr-Leu pair in the C-terminus. Can be reversibly inactivated by oxidation. In Bacillus cereus, this protein is Hemolysin.